Consider the following 297-residue polypeptide: Inactive beta selinene synthase (297 aa).

Belongs to the terpene synthase family. As to quaternary structure, monomer.

The protein localises to the cytoplasm. Its function is as follows. Inactive selinene synthase. The chain is Inactive beta selinene synthase from Zea mays (Maize).